A 104-amino-acid polypeptide reads, in one-letter code: Nucleoid-associated protein OB0030 (104 aa).

The disordered stretch occupies residues 1–23 (MKGNMNNMMKQMQKMQKKMMQAQ).

It belongs to the YbaB/EbfC family. Homodimer.

The protein resides in the cytoplasm. It is found in the nucleoid. Binds to DNA and alters its conformation. May be involved in regulation of gene expression, nucleoid organization and DNA protection. The chain is Nucleoid-associated protein OB0030 from Oceanobacillus iheyensis (strain DSM 14371 / CIP 107618 / JCM 11309 / KCTC 3954 / HTE831).